A 206-amino-acid polypeptide reads, in one-letter code: 2,3-bisphosphoglycerate-dependent phosphoglycerate mutase (206 aa).

Substrate is bound by residues Arg9–Asn16, Thr22–Gly23, Arg61, Glu88–Tyr91, Lys99, Arg115–Arg116, and Gly159–Asn160. His10 functions as the Tele-phosphohistidine intermediate in the catalytic mechanism. Glu88 (proton donor/acceptor) is an active-site residue.

Belongs to the phosphoglycerate mutase family. BPG-dependent PGAM subfamily. As to quaternary structure, homodimer.

The catalysed reaction is (2R)-2-phosphoglycerate = (2R)-3-phosphoglycerate. It participates in carbohydrate degradation; glycolysis; pyruvate from D-glyceraldehyde 3-phosphate: step 3/5. In terms of biological role, catalyzes the interconversion of 2-phosphoglycerate and 3-phosphoglycerate. The chain is 2,3-bisphosphoglycerate-dependent phosphoglycerate mutase from Bartonella bacilliformis (strain ATCC 35685 / KC583 / Herrer 020/F12,63).